We begin with the raw amino-acid sequence, 187 residues long: Cytokinin riboside 5'-monophosphate phosphoribohydrolase (187 aa).

Residue Lys74 forms an Isoglutamyl lysine isopeptide (Lys-Gln) (interchain with Q-Cter in protein Pup) linkage. Substrate contacts are provided by residues Glu80, Arg98 to Lys99, Gly115 to Glu121, and Thr127.

It belongs to the LOG family. As to quaternary structure, homodimer. In terms of processing, pupylated at Lys-74 by the prokaryotic ubiquitin-like protein Pup, which leads to its degradation by the proteasome. The proteasomal control of cytokinin synthesis is essential to protect M.tuberculosis against host-produced NO.

The catalysed reaction is N(6)-(dimethylallyl)adenosine 5'-phosphate + H2O = N(6)-dimethylallyladenine + D-ribose 5-phosphate. The enzyme catalyses 9-ribosyl-trans-zeatin 5'-phosphate + H2O = trans-zeatin + D-ribose 5-phosphate. Functionally, catalyzes the hydrolytic removal of ribose 5'-monophosphate from nitrogen N6-modified adenosines, the final step of bioactive cytokinin synthesis. Is involved in the synthesis of isopentenyladenine (iP) and 2-methylthio-iP (2MeS-iP), the most abundant cytokinins detected in M.tuberculosis lysates and supernatants. Is also able to convert trans-zeatin-riboside monophosphate (tZRMP) to trans-zeatin (tZ) in vitro; however, it may not be involved in the biosynthesis of this minor cytokinin in vivo. Accumulation of Rv1205 sensitizes M.tuberculosis to nitric oxide since cytokinin breakdown products synergize with NO to kill M.tuberculosis. Shows a slow AMP hydrolase activity, but is not able to hydrolyze ATP. Displays no lysine decarboxylase (LDC) activity (L-lysine conversion to cadaverine). The polypeptide is Cytokinin riboside 5'-monophosphate phosphoribohydrolase (Mycobacterium tuberculosis (strain ATCC 25618 / H37Rv)).